The chain runs to 442 residues: C4-dicarboxylate transport protein (442 aa).

A run of 9 helical transmembrane segments spans residues 13-33 (VLYF…HFYP), 49-69 (GIKM…IAGM), 81-101 (LALL…LVVV), 149-169 (AFAK…GFAL), 193-213 (MIAI…AFTI), 227-247 (LMGS…GIIA), 312-332 (IYLT…MTLL), 336-356 (TLLA…GSGF), and 357-377 (IVLA…LAII).

Belongs to the dicarboxylate/amino acid:cation symporter (DAACS) (TC 2.A.23) family.

The protein localises to the cell membrane. Responsible for the transport of dicarboxylates such as succinate, fumarate, and malate across the membrane. The polypeptide is C4-dicarboxylate transport protein (Polynucleobacter asymbioticus (strain DSM 18221 / CIP 109841 / QLW-P1DMWA-1) (Polynucleobacter necessarius subsp. asymbioticus)).